We begin with the raw amino-acid sequence, 271 residues long: Thiazole synthase (271 aa).

K95 functions as the Schiff-base intermediate with DXP in the catalytic mechanism. 1-deoxy-D-xylulose 5-phosphate contacts are provided by residues G156, 182-183 (AG), and 204-205 (NT).

Belongs to the ThiG family. In terms of assembly, homotetramer. Forms heterodimers with either ThiH or ThiS.

The protein resides in the cytoplasm. The enzyme catalyses [ThiS sulfur-carrier protein]-C-terminal-Gly-aminoethanethioate + 2-iminoacetate + 1-deoxy-D-xylulose 5-phosphate = [ThiS sulfur-carrier protein]-C-terminal Gly-Gly + 2-[(2R,5Z)-2-carboxy-4-methylthiazol-5(2H)-ylidene]ethyl phosphate + 2 H2O + H(+). It functions in the pathway cofactor biosynthesis; thiamine diphosphate biosynthesis. In terms of biological role, catalyzes the rearrangement of 1-deoxy-D-xylulose 5-phosphate (DXP) to produce the thiazole phosphate moiety of thiamine. Sulfur is provided by the thiocarboxylate moiety of the carrier protein ThiS. In vitro, sulfur can be provided by H(2)S. The sequence is that of Thiazole synthase from Yersinia pestis.